A 251-amino-acid chain; its full sequence is Imidazole glycerol phosphate synthase subunit HisF (251 aa).

Residues Asp12 and Asp131 contribute to the active site.

The protein belongs to the HisA/HisF family. As to quaternary structure, heterodimer of HisH and HisF.

It localises to the cytoplasm. The catalysed reaction is 5-[(5-phospho-1-deoxy-D-ribulos-1-ylimino)methylamino]-1-(5-phospho-beta-D-ribosyl)imidazole-4-carboxamide + L-glutamine = D-erythro-1-(imidazol-4-yl)glycerol 3-phosphate + 5-amino-1-(5-phospho-beta-D-ribosyl)imidazole-4-carboxamide + L-glutamate + H(+). The protein operates within amino-acid biosynthesis; L-histidine biosynthesis; L-histidine from 5-phospho-alpha-D-ribose 1-diphosphate: step 5/9. IGPS catalyzes the conversion of PRFAR and glutamine to IGP, AICAR and glutamate. The HisF subunit catalyzes the cyclization activity that produces IGP and AICAR from PRFAR using the ammonia provided by the HisH subunit. The chain is Imidazole glycerol phosphate synthase subunit HisF from Streptomyces griseus subsp. griseus (strain JCM 4626 / CBS 651.72 / NBRC 13350 / KCC S-0626 / ISP 5235).